A 539-amino-acid chain; its full sequence is Fusion glycoprotein F0 (539 aa).

An N-terminal signal peptide occupies residues M1 to C18. Over Q19–T493 the chain is Extracellular. C63 and C192 are joined by a disulfide. Residues F110–L134 form a fusion peptide region. Positions V135–S163 form a coiled coil. An N-linked (GlcNAc...) asparagine; by host glycan is attached at N238. 4 disulfides stabilise this stretch: C331/C340, C355/C363, C387/C392, and C394/C417. N359 carries an N-linked (GlcNAc...) asparagine; by host glycan. Residue N446 is glycosylated (N-linked (GlcNAc...) asparagine; by host). Residues E459–I484 adopt a coiled-coil conformation. Residues I494–I514 traverse the membrane as a helical segment. The Cytoplasmic portion of the chain corresponds to A515–K539.

It belongs to the paramyxoviruses fusion glycoprotein family. Homotrimer of disulfide-linked F1-F2. Post-translationally, the inactive precursor F0 is glycosylated and proteolytically cleaved into F1 and F2 to be functionally active. The cleavage is mediated by cellular proteases during the transport and maturation of the polypeptide.

It localises to the virion membrane. The protein localises to the host cell membrane. Class I viral fusion protein. Under the current model, the protein has at least 3 conformational states: pre-fusion native state, pre-hairpin intermediate state, and post-fusion hairpin state. During viral and plasma cell membrane fusion, the heptad repeat (HR) regions assume a trimer-of-hairpins structure, positioning the fusion peptide in close proximity to the C-terminal region of the ectodomain. The formation of this structure appears to drive apposition and subsequent fusion of viral and plasma cell membranes. Directs fusion of viral and cellular membranes leading to delivery of the nucleocapsid into the cytoplasm. This fusion is pH independent and occurs directly at the outer cell membrane. The trimer of F1-F2 (F protein) probably interacts with HN at the virion surface. Upon HN binding to its cellular receptor, the hydrophobic fusion peptide is unmasked and interacts with the cellular membrane, inducing the fusion between cell and virion membranes. Later in infection, F proteins expressed at the plasma membrane of infected cells could mediate fusion with adjacent cells to form syncytia, a cytopathic effect that could lead to tissue necrosis. This is Fusion glycoprotein F0 (F) from Homo sapiens (Human).